The chain runs to 139 residues: Maximins 4/H3 type 4 (139 aa).

A signal peptide spans 1 to 18 (MNFKYIIAVSFLIASAYA). A propeptide spanning residues 19–43 (RSVQNDEQSLSQRDVLEEESLREIR) is cleaved from the precursor. Asparagine 70 carries the post-translational modification Asparagine amide. The propeptide occupies 74–118 (TAEEHEVMKRLEAVMRDLDSLDHPEEASERETRGFNQDEIAKEKR). At isoleucine 138 the chain carries Isoleucine amide.

The protein belongs to the bombinin family. Expressed by the skin glands.

The protein localises to the secreted. In terms of biological role, maximin-4 shows antibacterial activity against both Gram-positive and Gram-negative bacteria. It also shows antimicrobial activity against the fungus C.albicans, but not against A.flavus nor P.uticale. It has little hemolytic activity. It does not possess a significant cytotoxicity against tumor cell lines. It does not possess a significant anti-HIV activity. Maximin-H3 shows antibacterial activity against both Gram-positive and Gram-negative bacteria. It also shows antimicrobial activity against the fungus C.albicans. Shows strong hemolytic activity. The sequence is that of Maximins 4/H3 type 4 from Bombina maxima (Giant fire-bellied toad).